Consider the following 274-residue polypeptide: MAIHLYKTSTPSTRNGAVDSQVKSNPRNNLIYGQHHCGKGRNARGIITARHRGGGHKRLYRKIDFRRNAKDIYGRIVTIEYDPNRNAYICLIHYGDGEKRYILHPRGAIIGDTIVSGTEVPIKMGNALPLTDMPLGTAIHNIEITLGKGGQLARAAGAVAKLIAKEGKSATLKLPSGEVRLISKNCSATVGQVGNVGVNQKSLGRAGSKCWLGKRPVVRGVVMNPVDHPHGGGEGRAPIGRKKPVTPWGYPALGRRTRKRKKYSETLILRRRSK.

Disordered stretches follow at residues 1–22 (MAIHLYKTSTPSTRNGAVDSQV) and 225–274 (PVDH…RRSK).

This sequence belongs to the universal ribosomal protein uL2 family. As to quaternary structure, part of the 50S ribosomal subunit.

The protein resides in the plastid. The protein localises to the chloroplast. This chain is Large ribosomal subunit protein uL2cz/uL2cy (rpl2-A), found in Nasturtium officinale (Watercress).